The sequence spans 213 residues: Adenylate kinase (213 aa).

10–15 (GSGKGT) contributes to the ATP binding site. Positions 30 to 59 (SVGDLLRNIISSESKLGKGIKDTVESGNLI) are NMP. AMP contacts are provided by residues arginine 36, 57 to 59 (NLI), 83 to 86 (GFPR), and glutamine 90. The interval 125–160 (DRLTCLDCKSIYSISSFKNTTCAKCKSTRLEKRIDD) is LID. Arginine 126 provides a ligand contact to ATP. Positions 129 and 132 each coordinate Zn(2+). Residue 135-136 (IY) coordinates ATP. The Zn(2+) site is built by cysteine 146 and cysteine 149. The AMP site is built by arginine 157 and arginine 169. ATP is bound at residue leucine 195.

This sequence belongs to the adenylate kinase family. In terms of assembly, monomer.

The protein resides in the cytoplasm. The catalysed reaction is AMP + ATP = 2 ADP. It functions in the pathway purine metabolism; AMP biosynthesis via salvage pathway; AMP from ADP: step 1/1. Functionally, catalyzes the reversible transfer of the terminal phosphate group between ATP and AMP. Plays an important role in cellular energy homeostasis and in adenine nucleotide metabolism. This Wolbachia pipientis subsp. Culex pipiens (strain wPip) protein is Adenylate kinase.